Reading from the N-terminus, the 246-residue chain is MGQKINPVSNRLGIIRGWDSNWYGGRKYGETLLEDSRIRQYLNARLAKASVSRIVIERALKLVTITICTARPGMIIGKAGQEVDKLKEELKRITKKDVQINIYEIRKPELDAAIVAENIARQLEGKIAYRRAVKMAIASAMRMGAEGIKIQVSGRLNGAEMARSEMFKEGRTPLHTLRADIDYALAEALTKVGLLGIKVWICKGEVYEKRDLAPNFAVAKNQSRRPNAQGGNNRGGDRNRRRKGNR.

In terms of domain architecture, KH type-2 spans 38-106 (IRQYLNARLA…DVQINIYEIR (69 aa)). The tract at residues 218 to 246 (VAKNQSRRPNAQGGNNRGGDRNRRRKGNR) is disordered.

Belongs to the universal ribosomal protein uS3 family. Part of the 30S ribosomal subunit. Forms a tight complex with proteins S10 and S14.

In terms of biological role, binds the lower part of the 30S subunit head. Binds mRNA in the 70S ribosome, positioning it for translation. The polypeptide is Small ribosomal subunit protein uS3 (Porphyromonas gingivalis (strain ATCC 33277 / DSM 20709 / CIP 103683 / JCM 12257 / NCTC 11834 / 2561)).